A 411-amino-acid chain; its full sequence is Glutamate dehydrogenase (411 aa).

Lys102 is an active-site residue.

It belongs to the Glu/Leu/Phe/Val dehydrogenases family.

The catalysed reaction is L-glutamate + NAD(+) + H2O = 2-oxoglutarate + NH4(+) + NADH + H(+). It carries out the reaction L-glutamate + NADP(+) + H2O = 2-oxoglutarate + NH4(+) + NADPH + H(+). The protein is Glutamate dehydrogenase (GDH1) of Zea mays (Maize).